A 919-amino-acid polypeptide reads, in one-letter code: UPF0182 protein Tery_4385 (919 aa).

7 helical membrane passes run 6 to 26 (YIII…RTLV), 52 to 72 (IFLW…NYWI), 96 to 116 (IFVK…AATA), 160 to 180 (WLFT…ALKG), 198 to 218 (THIS…FWFE), 243 to 263 (FAYW…VLSV), and 268 to 288 (IIWP…FNVL).

It belongs to the UPF0182 family.

It is found in the cell membrane. This Trichodesmium erythraeum (strain IMS101) protein is UPF0182 protein Tery_4385.